Here is a 560-residue protein sequence, read N- to C-terminus: Arginine--tRNA ligase (560 aa).

The 'HIGH' region signature appears at 164 to 174; sequence FYYNDAGNQID.

It belongs to the class-I aminoacyl-tRNA synthetase family. Monomer.

The protein localises to the cytoplasm. It catalyses the reaction tRNA(Arg) + L-arginine + ATP = L-arginyl-tRNA(Arg) + AMP + diphosphate. The polypeptide is Arginine--tRNA ligase (Bordetella pertussis (strain Tohama I / ATCC BAA-589 / NCTC 13251)).